We begin with the raw amino-acid sequence, 449 residues long: Heterogeneous nuclear ribonucleoprotein H (449 aa).

At Met-1 the chain carries N-acetylmethionine. Met-2 bears the N-acetylmethionine; in Heterogeneous nuclear ribonucleoprotein H, N-terminally processed mark. Residues 11–90 (FVVKVRGLPW…RYVEVFKSNN (80 aa)) enclose the RRM 1 domain. Ser-23 is modified (phosphoserine). Lys-35 is covalently cross-linked (Glycyl lysine isopeptide (Lys-Gly) (interchain with G-Cter in SUMO2)). Residues Ser-54 and Ser-63 each carry the phosphoserine modification. Glycyl lysine isopeptide (Lys-Gly) (interchain with G-Cter in SUMO2) cross-links involve residues Lys-87 and Lys-98. The region spanning 111-188 (GFVRLRGLPF…RYIEIFKSSR (78 aa)) is the RRM 2 domain. A Dimethylated arginine; alternate modification is found at Arg-233. Arg-233 carries the omega-N-methylarginine; alternate modification. Residues 234-249 (GAYGGGYGGYDDYNGY) form a 1-1 repeat. The 2 X 16 AA Gly-rich approximate repeats stretch occupies residues 234-433 (GAYGGGYGGY…YGGQSSMSGY (200 aa)). A Phosphotyrosine modification is found at Tyr-246. The 76-residue stretch at 289–364 (HCVHMRGLPY…RYVELFLNST (76 aa)) folds into the RRM 3 domain. A Phosphoserine modification is found at Ser-310. A run of 3 repeats spans residues 354–372 (HRYVELFLNSTAGASGGAY), 374–392 (HRYVELFLNSTAGASGGAY), and 418–433 (GGYGGGYGGQSSMSGY). The tract at residues 354–392 (HRYVELFLNSTAGASGGAYEHRYVELFLNSTAGASGGAY) is 2 X 19 AA perfect repeats.

Part of a ternary complex containing FUBP2, PTBP1, PTBP2 and HNRNPH1. Identified in the spliceosome C complex. Interacts with IGF2BP1. Interacts with CUGBP1; the interaction is RNA-dependent. Interacts with MBNL1; the interaction in RNA-independent.

The protein resides in the nucleus. It localises to the nucleoplasm. Its function is as follows. This protein is a component of the heterogeneous nuclear ribonucleoprotein (hnRNP) complexes which provide the substrate for the processing events that pre-mRNAs undergo before becoming functional, translatable mRNAs in the cytoplasm. Mediates pre-mRNA alternative splicing regulation. Inhibits, together with CUGBP1, insulin receptor (IR) pre-mRNA exon 11 inclusion in myoblast. Binds to the IR RNA. Binds poly(RG). The polypeptide is Heterogeneous nuclear ribonucleoprotein H (Hnrnph1) (Mus musculus (Mouse)).